The following is a 149-amino-acid chain: Calmodulin (149 aa).

EF-hand domains are found at residues 8 to 43 (EQIAEFKEAFSLFDKDGDGTITTKELGTVMRSLGQN), 44 to 79 (PTEAELQDMINEVDADGNGTIDFPEFLTMMARKMKD), 81 to 116 (DSEEEILEAFKVFDKDGNGFISAAELRHIMTNLGEK), and 117 to 149 (LTDEEVDEMIREADIDGDGQINYEEFVKMMMSK). Ca(2+) contacts are provided by Asp-21, Asp-23, Asp-25, Thr-27, Glu-32, Asp-57, Asp-59, Asn-61, Thr-63, Glu-68, Asp-94, Asp-96, Asn-98, Glu-105, Asp-130, Asp-132, Asp-134, Gln-136, and Glu-141.

It belongs to the calmodulin family.

Calmodulin mediates the control of a large number of enzymes, ion channels and other proteins by Ca(2+). Among the enzymes to be stimulated by the calmodulin-Ca(2+) complex are a number of protein kinases and phosphatases. This chain is Calmodulin, found in Globisporangium splendens (Leaf rot fungus).